The following is a 127-amino-acid chain: Holo-[acyl-carrier-protein] synthase (127 aa).

Residues aspartate 9 and glutamate 58 each contribute to the Mg(2+) site.

The protein belongs to the P-Pant transferase superfamily. AcpS family. The cofactor is Mg(2+).

It is found in the cytoplasm. The catalysed reaction is apo-[ACP] + CoA = holo-[ACP] + adenosine 3',5'-bisphosphate + H(+). Transfers the 4'-phosphopantetheine moiety from coenzyme A to a Ser of acyl-carrier-protein. In Shewanella sp. (strain W3-18-1), this protein is Holo-[acyl-carrier-protein] synthase.